A 347-amino-acid chain; its full sequence is Heat-inducible transcription repressor HrcA (347 aa).

It belongs to the HrcA family.

Its function is as follows. Negative regulator of class I heat shock genes (grpE-dnaK-dnaJ and groELS operons). Prevents heat-shock induction of these operons. The protein is Heat-inducible transcription repressor HrcA of Mycobacterium sp. (strain JLS).